Here is a 290-residue protein sequence, read N- to C-terminus: Shikimate dehydrogenase (NADP(+)) (290 aa).

Residues 21–23 (SLS) and Thr68 each bind shikimate. Lys72 serves as the catalytic Proton acceptor. Glu84 is a binding site for NADP(+). Shikimate-binding residues include Asn93 and Asp108. NADP(+) is bound by residues 132 to 136 (GYGGA) and Leu230. Tyr232 lines the shikimate pocket. Gly253 contacts NADP(+).

Belongs to the shikimate dehydrogenase family. As to quaternary structure, homodimer.

The catalysed reaction is shikimate + NADP(+) = 3-dehydroshikimate + NADPH + H(+). Its pathway is metabolic intermediate biosynthesis; chorismate biosynthesis; chorismate from D-erythrose 4-phosphate and phosphoenolpyruvate: step 4/7. Functionally, involved in the biosynthesis of the chorismate, which leads to the biosynthesis of aromatic amino acids. Catalyzes the reversible NADPH linked reduction of 3-dehydroshikimate (DHSA) to yield shikimate (SA). This Synechocystis sp. (strain ATCC 27184 / PCC 6803 / Kazusa) protein is Shikimate dehydrogenase (NADP(+)).